Here is a 111-residue protein sequence, read N- to C-terminus: Translation initiation factor 1A (111 aa).

The 73-residue stretch at 11 to 83 folds into the S1-like domain; that stretch reads KKIRLPKEGE…ERADVTWRYT (73 aa).

The protein belongs to the eIF-1A family.

Functionally, seems to be required for maximal rate of protein biosynthesis. Enhances ribosome dissociation into subunits and stabilizes the binding of the initiator Met-tRNA(I) to 40 S ribosomal subunits. This is Translation initiation factor 1A (eIF1A) from Methanopyrus kandleri (strain AV19 / DSM 6324 / JCM 9639 / NBRC 100938).